The primary structure comprises 204 residues: ATP synthase subunit b 2 (204 aa).

The helical transmembrane segment at 50 to 70 (IFWLAVTFGLLLFLMSKVALP) threads the bilayer.

This sequence belongs to the ATPase B chain family. As to quaternary structure, F-type ATPases have 2 components, F(1) - the catalytic core - and F(0) - the membrane proton channel. F(1) has five subunits: alpha(3), beta(3), gamma(1), delta(1), epsilon(1). F(0) has three main subunits: a(1), b(2) and c(10-14). The alpha and beta chains form an alternating ring which encloses part of the gamma chain. F(1) is attached to F(0) by a central stalk formed by the gamma and epsilon chains, while a peripheral stalk is formed by the delta and b chains.

Its subcellular location is the cell inner membrane. Functionally, f(1)F(0) ATP synthase produces ATP from ADP in the presence of a proton or sodium gradient. F-type ATPases consist of two structural domains, F(1) containing the extramembraneous catalytic core and F(0) containing the membrane proton channel, linked together by a central stalk and a peripheral stalk. During catalysis, ATP synthesis in the catalytic domain of F(1) is coupled via a rotary mechanism of the central stalk subunits to proton translocation. In terms of biological role, component of the F(0) channel, it forms part of the peripheral stalk, linking F(1) to F(0). The b'-subunit is a diverged and duplicated form of b found in plants and photosynthetic bacteria. This Rhodospirillum centenum (strain ATCC 51521 / SW) protein is ATP synthase subunit b 2 (atpF2).